Here is a 720-residue protein sequence, read N- to C-terminus: Photosystem I P700 chlorophyll a apoprotein A1 (720 aa).

8 helical membrane-spanning segments follow: residues 61–84 (VFSAHFGQLAIIFIWLSGMYFHGA), 147–170 (LYCTAIGALIFAALMLFAGWFHYH), 186–210 (LNHHLAGLLGLGSLSWAGHQIHVSL), 282–300 (TAHHHLAIAILFLIAGHMY), 337–360 (WHAQLALNLAMLGSLTIVVAHHMY), 376–402 (LSLFTHHMWIGGFLIVGAAAHAAIFMV), 424–446 (AIVSHLNWACIFLGFHSFGLYIH), and 522–540 (FLVHHIHAFTIHVTVLILL). Residues cysteine 564 and cysteine 573 each contribute to the [4Fe-4S] cluster site. 2 helical membrane-spanning segments follow: residues 580–601 (HVFLGLFWMYNAISVVIFHFSW) and 655–677 (LSAYGLLFLGAHFVWAFSLMFLF). Histidine 666 contacts chlorophyll a'. 2 residues coordinate chlorophyll a: methionine 674 and tyrosine 682. Tryptophan 683 is a phylloquinone binding site. The helical transmembrane segment at 715-720 (AVGVAH) threads the bilayer.

It belongs to the PsaA/PsaB family. As to quaternary structure, the PsaA/B heterodimer binds the P700 chlorophyll special pair and subsequent electron acceptors. PSI consists of a core antenna complex that captures photons, and an electron transfer chain that converts photonic excitation into a charge separation. The eukaryotic PSI reaction center is composed of at least 11 subunits. Requires P700 is a chlorophyll a/chlorophyll a' dimer, A0 is one or more chlorophyll a, A1 is one or both phylloquinones and FX is a shared 4Fe-4S iron-sulfur center. as cofactor.

The protein localises to the plastid. It localises to the chloroplast thylakoid membrane. The catalysed reaction is reduced [plastocyanin] + hnu + oxidized [2Fe-2S]-[ferredoxin] = oxidized [plastocyanin] + reduced [2Fe-2S]-[ferredoxin]. Functionally, psaA and PsaB bind P700, the primary electron donor of photosystem I (PSI), as well as the electron acceptors A0, A1 and FX. PSI is a plastocyanin-ferredoxin oxidoreductase, converting photonic excitation into a charge separation, which transfers an electron from the donor P700 chlorophyll pair to the spectroscopically characterized acceptors A0, A1, FX, FA and FB in turn. Oxidized P700 is reduced on the lumenal side of the thylakoid membrane by plastocyanin. This is Photosystem I P700 chlorophyll a apoprotein A1 from Sequoia sempervirens (California redwood).